The chain runs to 153 residues: Probable histone H2A.2 (153 aa).

2 disordered regions span residues 1 to 24 and 127 to 153; these read MDAS…KKSV and KKTE…PKKA. Basic and acidic residues predominate over residues 127–141; sequence KKTERSNTVSKEPKS. The segment covering 142-153 has biased composition (basic residues); sequence PKPKAGKSPKKA. An SPKK motif motif is present at residues 149–152; sequence SPKK.

It belongs to the histone H2A family. As to quaternary structure, the nucleosome is a histone octamer containing two molecules each of H2A, H2B, H3 and H4 assembled in one H3-H4 heterotetramer and two H2A-H2B heterodimers. The octamer wraps approximately 147 bp of DNA.

The protein localises to the nucleus. The protein resides in the chromosome. Its function is as follows. Core component of nucleosome. Nucleosomes wrap and compact DNA into chromatin, limiting DNA accessibility to the cellular machineries which require DNA as a template. Histones thereby play a central role in transcription regulation, DNA repair, DNA replication and chromosomal stability. DNA accessibility is regulated via a complex set of post-translational modifications of histones, also called histone code, and nucleosome remodeling. The protein is Probable histone H2A.2 of Medicago truncatula (Barrel medic).